We begin with the raw amino-acid sequence, 492 residues long: Probable malate:quinone oxidoreductase 1 (492 aa).

This sequence belongs to the MQO family. Requires FAD as cofactor.

The enzyme catalyses (S)-malate + a quinone = a quinol + oxaloacetate. It participates in carbohydrate metabolism; tricarboxylic acid cycle; oxaloacetate from (S)-malate (quinone route): step 1/1. The protein is Probable malate:quinone oxidoreductase 1 of Staphylococcus aureus (strain MW2).